A 315-amino-acid chain; its full sequence is MLKNKILTTTLSVSLLAPLANPLLENAKAANDTEDIGKGSDIEIIKRTEDKTSNKWGVTQNIQFDFVKDKKYNKDALILKMQGFISSRTTYYNYKKTNHVKAMRWPFQYNIGLKTNDKYVSLINYLPKNKIESTNVSQILGYNIGGNFQSAPSLGGNGSFNYSKSISYTQQNYVSEVEQQNSKSVLWGVKANSFATESGQKSAFDSDLFVGYKPHSKDPRDYFVPDSELPPLVQSGFNPSFIATVSHEKGSSDTSEFEITYGRNMDVTHAIKRSTHYGNSYLDGHRVHNAFVNRNYTVKYEVNWKTHEIKVKGQN.

The signal sequence occupies residues 1 to 29 (MLKNKILTTTLSVSLLAPLANPLLENAKA).

Belongs to the aerolysin family. Toxicity requires sequential binding and synergistic association of a class S and a class F component which form heterooligomeric complexes. HlgC (class S) associates with HlgB (class F) thus forming an CB toxin.

Its function is as follows. Toxin that seems to act by forming pores in the membrane of the cell. Has a hemolytic and a leucotoxic activity. This chain is Gamma-hemolysin component C (hlgC), found in Staphylococcus aureus (strain COL).